A 179-amino-acid polypeptide reads, in one-letter code: MQVILKEDVVNLGYKDDIVTVKDGYGRNFLIPQGKAVIASESAKKVLAENLRQRAHKIAQIKKEAEEKAASMQGISLTIKAKTSSTGTIFGSVTNIQIAEELAKKGVEVDRKIIVLKPAVKEVGNYTAVVRLHKEVTVEIPFEVVSENETIIEAKPEGAPVPVAEEPAAEAEQAEVAAE.

The disordered stretch occupies residues 156–179 (PEGAPVPVAEEPAAEAEQAEVAAE). Low complexity predominate over residues 157 to 166 (EGAPVPVAEE). A compositionally biased stretch (acidic residues) spans 167-179 (PAAEAEQAEVAAE).

Belongs to the bacterial ribosomal protein bL9 family.

Its function is as follows. Binds to the 23S rRNA. The polypeptide is Large ribosomal subunit protein bL9 (Porphyromonas gingivalis (strain ATCC 33277 / DSM 20709 / CIP 103683 / JCM 12257 / NCTC 11834 / 2561)).